The following is a 176-amino-acid chain: NADH:riboflavin 5'-phosphate oxidoreductase (176 aa).

Its function is as follows. Provides the reduced form of flavin mononucleotide for the PIIA synthase reaction. The protein is NADH:riboflavin 5'-phosphate oxidoreductase (snaC) of Streptomyces pristinaespiralis.